A 526-amino-acid polypeptide reads, in one-letter code: Variant surface glycoprotein MITAT 1.4A (526 aa).

A signal peptide spans 1–33; the sequence is MDCHTKETLGVTQWRRSTMLTLSLLYAITPADG. 2 cysteine pairs are disulfide-bonded: C47-C173 and C154-C215. The interval 157-193 is disordered; it reads NEGGDGDGKDQLAPKGCRHGTEADFDAGAGPAESEVA. An N-linked (GlcNAc...) asparagine glycan is attached at N453. Residue D503 is the site of GPI-anchor amidated aspartate attachment. Residues 504-526 constitute a propeptide, removed in mature form; sequence SSILVTKKFALTVVSAAFVALLF.

It is found in the cell membrane. In terms of biological role, VSG forms a coat on the surface of the parasite. The trypanosome evades the immune response of the host by expressing a series of antigenically distinct VSGs from an estimated 1000 VSG genes. The protein is Variant surface glycoprotein MITAT 1.4A of Trypanosoma brucei brucei.